A 179-amino-acid polypeptide reads, in one-letter code: MNPPINFLPWRQQRRTAFLRFWLLMFVAPLLLAVGITLILRLTGSAEARIDAVLLQAEQQLARSLQITKPRLLEQQQLREQRSQRQRQRQFTRDWQSALEALAALLPEHAWLTTISWQQGTLEIKGLTTSITALNALETSLRQDASFHLNQRGATQQDAQGRWQFEYQLTRKVSDEHVL.

The chain crosses the membrane as a helical span at residues 19–39 (LRFWLLMFVAPLLLAVGITLI).

It is found in the cell inner membrane. Required for the use of extracellular DNA as a nutrient. The protein is DNA utilization protein HofN (hofN) of Escherichia coli (strain K12).